We begin with the raw amino-acid sequence, 397 residues long: Serpin B10 (397 aa).

Residues 74 to 77 (KKRK) carry the Nuclear localization signal motif.

Belongs to the serpin family. Ov-serpin subfamily.

It is found in the nucleus. It localises to the cytoplasm. In terms of biological role, protease inhibitor that may play a role in the regulation of protease activities during hematopoiesis and apoptosis induced by TNF. May regulate protease activities in the cytoplasm and in the nucleus. This chain is Serpin B10 (SERPINB10), found in Otolemur garnettii (Small-eared galago).